We begin with the raw amino-acid sequence, 60 residues long: Ferredoxin (60 aa).

4Fe-4S ferredoxin-type domains lie at 2–29 and 30–60; these read KVRV…LGDD and GKAK…SVEE. Residues cysteine 10, cysteine 13, and cysteine 16 each coordinate [4Fe-4S] cluster. A disulfide bond links cysteine 20 and cysteine 43. A [4Fe-4S] cluster-binding site is contributed by cysteine 51.

As to quaternary structure, monomer. Requires [4Fe-4S] cluster as cofactor.

Functionally, ferredoxins are iron-sulfur proteins that transfer electrons in a wide variety of metabolic reactions. This is Ferredoxin (fdx) from Thermotoga maritima (strain ATCC 43589 / DSM 3109 / JCM 10099 / NBRC 100826 / MSB8).